A 155-amino-acid polypeptide reads, in one-letter code: SsrA-binding protein (155 aa).

The protein belongs to the SmpB family.

It localises to the cytoplasm. Its function is as follows. Required for rescue of stalled ribosomes mediated by trans-translation. Binds to transfer-messenger RNA (tmRNA), required for stable association of tmRNA with ribosomes. tmRNA and SmpB together mimic tRNA shape, replacing the anticodon stem-loop with SmpB. tmRNA is encoded by the ssrA gene; the 2 termini fold to resemble tRNA(Ala) and it encodes a 'tag peptide', a short internal open reading frame. During trans-translation Ala-aminoacylated tmRNA acts like a tRNA, entering the A-site of stalled ribosomes, displacing the stalled mRNA. The ribosome then switches to translate the ORF on the tmRNA; the nascent peptide is terminated with the 'tag peptide' encoded by the tmRNA and targeted for degradation. The ribosome is freed to recommence translation, which seems to be the essential function of trans-translation. The protein is SsrA-binding protein of Alkaliphilus oremlandii (strain OhILAs) (Clostridium oremlandii (strain OhILAs)).